Reading from the N-terminus, the 1064-residue chain is Phosphatidylinositol 4,5-bisphosphate 3-kinase catalytic subunit beta isoform (1064 aa).

The PI3K-ABD domain maps to 20–109; sequence SDGAISVDFL…LPVLKLVTRS (90 aa). The PI3K-RBD domain maps to 188–279; it reads GGKLVVAVHF…RTLPHFILVE (92 aa). Ser-318 is subject to Phosphoserine. Residues 323–490 enclose the C2 PI3K-type domain; it reads NNNPFQITLV…NATALHITFP (168 aa). A Nuclear localization signal (NLS) motif is present at residues 404 to 412; that stretch reads KVKTKKSTK. Residues 518–695 form the PIK helical domain; it reads ANVSSRGGKK…GVILEAYCRG (178 aa). Positions 766–1047 constitute a PI3K/PI4K catalytic domain; that stretch reads YVEKCKYMDS…KFDEALRESW (282 aa). A G-loop region spans residues 772–778; it reads YMDSKMK. The catalytic loop stretch occupies residues 910-918; the sequence is GIGDRHSDN. The interval 929 to 955 is activation loop; sequence HIDFGHILGNFKSKFGIKRERVPFILT. Ser-1064 carries the post-translational modification Phosphoserine; by autocatalysis.

This sequence belongs to the PI3/PI4-kinase family. In terms of assembly, heterodimer of a catalytic subunit PIK3CB and a p85 regulatory subunit (PIK3R1, PIK3R2 or PIK3R3). Interaction with PIK3R2 is required for nuclear localization and nuclear export. Part of a complex with PIK3R1 and PTEN. Binding to PTEN may antagonize the lipid kinase activity under normal growth conditions. Part of a complex involved in autophagosome formation composed of PIK3C3 and PIK3R4. Interacts with BECN1, ATG14 and RAB5A. Post-translationally, phosphorylation at Ser-1064 down-regulates lipid kinase activity. Autophosphorylation at Ser-1064 negatively regulates the phosphatidylinositol-4,5-bisphosphate 3-kinase activity.

The protein resides in the cytoplasm. It is found in the nucleus. It catalyses the reaction a 1,2-diacyl-sn-glycero-3-phospho-(1D-myo-inositol-4,5-bisphosphate) + ATP = a 1,2-diacyl-sn-glycero-3-phospho-(1D-myo-inositol-3,4,5-trisphosphate) + ADP + H(+). The enzyme catalyses 1-octadecanoyl-2-(5Z,8Z,11Z,14Z)-eicosatetraenoyl-sn-glycero-3-phospho-1D-myo-inositol 4,5-bisphosphate + ATP = 1-octadecanoyl-2-(5Z,8Z,11Z,14Z-eicosatetraenoyl)-sn-glycero-3-phospho-(1D-myo-inositol 3,4,5-triphosphate) + ADP + H(+). The catalysed reaction is L-seryl-[protein] + ATP = O-phospho-L-seryl-[protein] + ADP + H(+). It functions in the pathway phospholipid metabolism; phosphatidylinositol phosphate biosynthesis. Functionally, phosphoinositide-3-kinase (PI3K) phosphorylates phosphatidylinositol (PI) derivatives at position 3 of the inositol ring to produce 3-phosphoinositides. Uses ATP and PtdIns(4,5)P2 (phosphatidylinositol 4,5-bisphosphate) to generate phosphatidylinositol 3,4,5-trisphosphate (PIP3). PIP3 plays a key role by recruiting PH domain-containing proteins to the membrane, including AKT1 and PDPK1, activating signaling cascades involved in cell growth, survival, proliferation, motility and morphology. Involved in the activation of AKT1 upon stimulation by G-protein coupled receptors (GPCRs) ligands such as CXCL12, sphingosine 1-phosphate, and lysophosphatidic acid. May also act downstream receptor tyrosine kinases. Required in different signaling pathways for stable platelet adhesion and aggregation. Plays a role in platelet activation signaling triggered by GPCRs, alpha-IIb/beta-3 integrins (ITGA2B/ ITGB3) and ITAM (immunoreceptor tyrosine-based activation motif)-bearing receptors such as GP6. Regulates the strength of adhesion of ITGA2B/ ITGB3 activated receptors necessary for the cellular transmission of contractile forces. Required for platelet aggregation induced by F2 (thrombin) and thromboxane A2 (TXA2). Has a role in cell survival. May have a role in cell migration. Involved in the early stage of autophagosome formation. Modulates the intracellular level of PtdIns3P (phosphatidylinositol 3-phosphate) and activates PIK3C3 kinase activity. May act as a scaffold, independently of its lipid kinase activity to positively regulate autophagy. May have a role in insulin signaling as scaffolding protein in which the lipid kinase activity is not required. May have a kinase-independent function in regulating cell proliferation and in clathrin-mediated endocytosis. Mediator of oncogenic signal in cell lines lacking PTEN. The lipid kinase activity is necessary for its role in oncogenic transformation. Required for the growth of ERBB2 and RAS driven tumors. Also has a protein kinase activity showing autophosphorylation. This chain is Phosphatidylinositol 4,5-bisphosphate 3-kinase catalytic subunit beta isoform (Pik3cb), found in Mus musculus (Mouse).